Consider the following 387-residue polypeptide: Na(+)/H(+) antiporter NhaA (387 aa).

The next 12 membrane-spanning stretches (helical) occupy residues 16-36, 53-73, 89-109, 118-138, 147-167, 171-191, 197-217, 220-240, 251-271, 283-303, 321-341, and 354-374; these read AGGV…NSSI, IEHY…GLEL, LLPI…HMFF, GSGI…SLLG, VFLT…IAIF, GIDV…FILN, ILWP…HSGV, TITG…PDSI, PVAF…IIDS, IGIF…FCAI, VIGV…ITLL, and IAIM…LKMT.

Belongs to the NhaA Na(+)/H(+) (TC 2.A.33) antiporter family.

Its subcellular location is the cell inner membrane. The enzyme catalyses Na(+)(in) + 2 H(+)(out) = Na(+)(out) + 2 H(+)(in). Functionally, na(+)/H(+) antiporter that extrudes sodium in exchange for external protons. In Cytophaga hutchinsonii (strain ATCC 33406 / DSM 1761 / CIP 103989 / NBRC 15051 / NCIMB 9469 / D465), this protein is Na(+)/H(+) antiporter NhaA.